Here is a 682-residue protein sequence, read N- to C-terminus: 1,4-alpha-glucan-branching enzyme (682 aa).

2 residues coordinate (1,4-alpha-D-glucosyl)n: Trp88 and Lys124. The Nucleophile role is filled by Asp342. Glu397 (proton donor) is an active-site residue.

This sequence belongs to the glycosyl hydrolase 13 family. GlgB subfamily.

The protein resides in the cytoplasm. The enzyme catalyses Transfers a segment of a (1-&gt;4)-alpha-D-glucan chain to a primary hydroxy group in a similar glucan chain.. The protein operates within glycan biosynthesis; glycogen biosynthesis. Glycogen-branching enzyme participates in the glycogen biosynthetic process along with glycogenin and glycogen synthase. Generates alpha-1,6-glucosidic branches from alpha-1,4-linked glucose chains, to increase solubility of the glycogen polymer. This chain is 1,4-alpha-glucan-branching enzyme (GLC3), found in Cryptococcus neoformans var. neoformans serotype D (strain B-3501A) (Filobasidiella neoformans).